Here is a 357-residue protein sequence, read N- to C-terminus: MAIQSDSLSSLPDSPRIVAPQPVSPNEESIERALRPKALEEYVGQQRAREQLEIFIAAARKRGEALDHVLLFGPPGLGKTTLAHIIAHEMGVQLRQTSGPVLERPGDLAALLTNLERNDVLFIDEIHRLSPVVEEILYPALEDFQIDILIGEGPAARSVKLDLQPFTLVGATTRAGMLTNPLRDRFGIVSRLEFYNTDELARIVTRSASLLNADITADGAHEVARRSRGTPRIANRLLRRVRDYAQVKAHGVIDQDAAGRALAMLDVDPQGLDVMDRKLLEAIVHKFDGGPVGVDSLAAAIGEERDTIEDVIEPYLIQHGYLQRTPRGRTATLTTWRHLGLTPPAAASGGTGELFSK.

Residues 1–15 (MAIQSDSLSSLPDSP) show a composition bias toward low complexity. Positions 1–30 (MAIQSDSLSSLPDSPRIVAPQPVSPNEESI) are disordered. Positions 13-195 (DSPRIVAPQP…FGIVSRLEFY (183 aa)) are large ATPase domain (RuvB-L). ATP contacts are provided by residues L34, R35, G76, K79, T80, T81, 142-144 (EDF), R185, Y195, and R232. T80 lines the Mg(2+) pocket. Residues 196 to 266 (NTDELARIVT…AAGRALAMLD (71 aa)) are small ATPAse domain (RuvB-S). The tract at residues 269 to 357 (PQGLDVMDRK…SGGTGELFSK (89 aa)) is head domain (RuvB-H). R305, R324, and R329 together coordinate DNA.

The protein belongs to the RuvB family. As to quaternary structure, homohexamer. Forms an RuvA(8)-RuvB(12)-Holliday junction (HJ) complex. HJ DNA is sandwiched between 2 RuvA tetramers; dsDNA enters through RuvA and exits via RuvB. An RuvB hexamer assembles on each DNA strand where it exits the tetramer. Each RuvB hexamer is contacted by two RuvA subunits (via domain III) on 2 adjacent RuvB subunits; this complex drives branch migration. In the full resolvosome a probable DNA-RuvA(4)-RuvB(12)-RuvC(2) complex forms which resolves the HJ.

It localises to the cytoplasm. The catalysed reaction is ATP + H2O = ADP + phosphate + H(+). Its function is as follows. The RuvA-RuvB-RuvC complex processes Holliday junction (HJ) DNA during genetic recombination and DNA repair, while the RuvA-RuvB complex plays an important role in the rescue of blocked DNA replication forks via replication fork reversal (RFR). RuvA specifically binds to HJ cruciform DNA, conferring on it an open structure. The RuvB hexamer acts as an ATP-dependent pump, pulling dsDNA into and through the RuvAB complex. RuvB forms 2 homohexamers on either side of HJ DNA bound by 1 or 2 RuvA tetramers; 4 subunits per hexamer contact DNA at a time. Coordinated motions by a converter formed by DNA-disengaged RuvB subunits stimulates ATP hydrolysis and nucleotide exchange. Immobilization of the converter enables RuvB to convert the ATP-contained energy into a lever motion, pulling 2 nucleotides of DNA out of the RuvA tetramer per ATP hydrolyzed, thus driving DNA branch migration. The RuvB motors rotate together with the DNA substrate, which together with the progressing nucleotide cycle form the mechanistic basis for DNA recombination by continuous HJ branch migration. Branch migration allows RuvC to scan DNA until it finds its consensus sequence, where it cleaves and resolves cruciform DNA. The sequence is that of Holliday junction branch migration complex subunit RuvB from Bordetella bronchiseptica (strain ATCC BAA-588 / NCTC 13252 / RB50) (Alcaligenes bronchisepticus).